Reading from the N-terminus, the 205-residue chain is Guanylate kinase (205 aa).

The 179-residue stretch at 18–196 folds into the Guanylate kinase-like domain; it reads PKLFIISAPA…AYQVLRSIFI (179 aa). Residue 25 to 32 coordinates ATP; sequence APAGAGKT.

This sequence belongs to the guanylate kinase family.

The protein resides in the cytoplasm. It carries out the reaction GMP + ATP = GDP + ADP. Essential for recycling GMP and indirectly, cGMP. This chain is Guanylate kinase (gmk), found in Chlamydia trachomatis serovar D (strain ATCC VR-885 / DSM 19411 / UW-3/Cx).